Here is a 156-residue protein sequence, read N- to C-terminus: SsrA-binding protein (156 aa).

Belongs to the SmpB family.

It localises to the cytoplasm. Required for rescue of stalled ribosomes mediated by trans-translation. Binds to transfer-messenger RNA (tmRNA), required for stable association of tmRNA with ribosomes. tmRNA and SmpB together mimic tRNA shape, replacing the anticodon stem-loop with SmpB. tmRNA is encoded by the ssrA gene; the 2 termini fold to resemble tRNA(Ala) and it encodes a 'tag peptide', a short internal open reading frame. During trans-translation Ala-aminoacylated tmRNA acts like a tRNA, entering the A-site of stalled ribosomes, displacing the stalled mRNA. The ribosome then switches to translate the ORF on the tmRNA; the nascent peptide is terminated with the 'tag peptide' encoded by the tmRNA and targeted for degradation. The ribosome is freed to recommence translation, which seems to be the essential function of trans-translation. The protein is SsrA-binding protein of Bacillus pumilus (strain SAFR-032).